The primary structure comprises 439 residues: GTPase Der (439 aa).

EngA-type G domains follow at residues 4–168 (PIVA…KDDE) and 177–352 (INIA…DNYT). Residues 10 to 17 (GRPNVGKS), 57 to 61 (DTGGI), 120 to 123 (NKID), 183 to 190 (GKPNVGKS), 230 to 234 (DTAGL), and 295 to 298 (NKWD) each bind GTP. In terms of domain architecture, KH-like spans 353 to 437 (KRVKTGVLND…GIKTEFRERK (85 aa)).

It belongs to the TRAFAC class TrmE-Era-EngA-EngB-Septin-like GTPase superfamily. EngA (Der) GTPase family. In terms of assembly, associates with the 50S ribosomal subunit.

Functionally, GTPase that plays an essential role in the late steps of ribosome biogenesis. The sequence is that of GTPase Der from Clostridium botulinum (strain Loch Maree / Type A3).